A 546-amino-acid chain; its full sequence is Probable zinc metalloprotease EGY2, chloroplastic (546 aa).

The N-terminal 64 residues, 1–64, are a transit peptide targeting the chloroplast; the sequence is MQLPAMSCSP…QIRNRRFVCQ (64 aa). Residues 67–143 form a disordered region; sequence TETEPDGDGN…DATPASDAQE (77 aa). Residues 69-86 show a composition bias toward acidic residues; it reads TEPDGDGNGDEEKEELGD. 2 stretches are compositionally biased toward polar residues: residues 89-110 and 118-130; these read SSPSVDSVTQENGSAESETNAD and NTEPLSSSDTVQN. 7 consecutive transmembrane segments (helical) span residues 257–277, 301–321, 326–346, 364–384, 427–447, 474–494, and 514–534; these read AVPEWFAAASFGVVTIFTLLL, VYGALVTAAIIGVHEIAHILA, GIKLAVPYFVPSWQIGSFGAI, AAGPLAGFSLGFVLLLLGFIL, PLVLWAWAGLLINAINSIPAG, LLGISALFNDVAFYWVVLIFF, and YISIGVAILLFGLLVCLPYPF.

The protein belongs to the peptidase M50B family.

It localises to the plastid. The protein localises to the chloroplast membrane. Functionally, probable membrane-associated metalloprotease that may be involved in chloroplast development. This chain is Probable zinc metalloprotease EGY2, chloroplastic (EGY2), found in Oryza sativa subsp. japonica (Rice).